A 237-amino-acid chain; its full sequence is Phosphoribosylaminoimidazole-succinocarboxamide synthase (237 aa).

Belongs to the SAICAR synthetase family.

It catalyses the reaction 5-amino-1-(5-phospho-D-ribosyl)imidazole-4-carboxylate + L-aspartate + ATP = (2S)-2-[5-amino-1-(5-phospho-beta-D-ribosyl)imidazole-4-carboxamido]succinate + ADP + phosphate + 2 H(+). It functions in the pathway purine metabolism; IMP biosynthesis via de novo pathway; 5-amino-1-(5-phospho-D-ribosyl)imidazole-4-carboxamide from 5-amino-1-(5-phospho-D-ribosyl)imidazole-4-carboxylate: step 1/2. The polypeptide is Phosphoribosylaminoimidazole-succinocarboxamide synthase (Enterococcus faecalis (strain ATCC 700802 / V583)).